The sequence spans 394 residues: Elongation factor Tu 2 (394 aa).

Residues 10-204 (KPHVNVGTIG…ALDSYIPEPE (195 aa)) form the tr-type G domain. Positions 19–26 (GHVDHGKT) are G1. 19 to 26 (GHVDHGKT) is a GTP binding site. Thr26 contributes to the Mg(2+) binding site. Positions 60-64 (GITIS) are G2. A G3 region spans residues 81–84 (DCPG). Residues 81–85 (DCPGH) and 136–139 (NKCD) contribute to the GTP site. Positions 136-139 (NKCD) are G4. The G5 stretch occupies residues 174–176 (SAL).

Belongs to the TRAFAC class translation factor GTPase superfamily. Classic translation factor GTPase family. EF-Tu/EF-1A subfamily. In terms of assembly, monomer.

It is found in the cytoplasm. The enzyme catalyses GTP + H2O = GDP + phosphate + H(+). In terms of biological role, GTP hydrolase that promotes the GTP-dependent binding of aminoacyl-tRNA to the A-site of ribosomes during protein biosynthesis. This chain is Elongation factor Tu 2, found in Pseudoalteromonas translucida (strain TAC 125).